A 339-amino-acid chain; its full sequence is Zinc transporter 3 (339 aa).

Residues 1–25 (MKTKNVKLLFFFFSVSLLLIAVVNA) form the signal peptide. The Extracellular portion of the chain corresponds to 26–54 (AEGHSHGGPKCECSHEDDHENKAGARKYK). A helical transmembrane segment spans residues 55–75 (IAAIPTVLIAGIIGVLFPLLG). Residues 76–86 (KVFPSLRPETC) lie on the Cytoplasmic side of the membrane. Residues 87–107 (FFFVTKAFAAGVILATGFMHV) form a helical membrane-spanning segment. Residues 108–123 (LPEAYEMLNSPCLTSE) lie on the Extracellular side of the membrane. A helical transmembrane segment spans residues 124-144 (AWEFPFTGFIAMIAAILTLSV). Residues 145 to 184 (DTFATSSFYKSHCKASKRVSDGETGESSVDSEKVQILRTR) are Cytoplasmic-facing. The helical transmembrane segment at 185–205 (VIAQVLELGIIVHSVVIGISL) threads the bilayer. Residues 206-216 (GASQSPDAAKA) are Extracellular-facing. Residues 217-237 (LFIALMFHQCFEGLGLGGCIA) traverse the membrane as a helical segment. Residues 238-247 (QGKFKCLSVT) are Cytoplasmic-facing. The helical transmembrane segment at 248–268 (IMSTFFAITTPIGIVVGMGIA) threads the bilayer. Residues 269 to 278 (NSYDESSPTA) lie on the Extracellular side of the membrane. A helical membrane pass occupies residues 279–299 (LIVQGVLNAASAGILIYMSLV). Over 300–315 (DLLAADFTHPKMQSNT) the chain is Cytoplasmic. The chain crosses the membrane as a helical span at residues 316-336 (GLQIMAHIALLLGAGLMSLLA). At 337–339 (KWA) the chain is on the extracellular side.

This sequence belongs to the ZIP transporter (TC 2.A.5) family. As to expression, expressed predominantly in the roots of zinc-deficient plants.

It is found in the cell membrane. Its function is as follows. Mediates zinc uptake from the rhizosphere. May also transport other divalent cations. In Arabidopsis thaliana (Mouse-ear cress), this protein is Zinc transporter 3 (ZIP3).